A 1828-amino-acid chain; its full sequence is Unconventional myosin-Va (1828 aa).

The residue at position 2 (A2) is an N-acetylalanine. The Myosin N-terminal SH3-like domain occupies 8-60 (TKFARVWIPDPEEVWKSAELLKDYKPGDKVLLLHLEEGKDLEYRLDPKTSELP). The Myosin motor domain maps to 69 to 763 (VGENDLTALS…QVAYLEKLRA (695 aa)). 163-170 (GESGAGKT) contributes to the ATP binding site. Positions 599–633 (ISPTSATSSGRTPLTRVPVKPTKGRPGQTAKEHKK) are disordered. The residue at position 600 (S600) is a Phosphoserine. Polar residues predominate over residues 600-610 (SPTSATSSGRT). Positions 643–665 (LHLLMETLNATTPHYVRCIKPND) are actin-binding. IQ domains follow at residues 766-788 (LRAACIRIQKTIRGWLLRKRYLC), 789-813 (MQRAAITVQRYVRGYQARCYAKFLR), 814-836 (RTKAATTIQKYWRMYVVRRKYKI), 837-861 (RRAATIVLQSYLRGYLARNRYRKIL), 862-884 (REHKAVIIQKRVRGWLARTHYKR), and 885-914 (TMKAIIYLQCCFRRMMAKRELKKLKIEARS). Coiled-coil stretches lie at residues 914-1239 (SVER…EVNA) and 1314-1418 (GLKE…ELEV). T1032 bears the Phosphothreonine mark. Residues 1105–1147 (VPKPGHKRTDSTHSSNESEYTFSSEFAETEDIAPRTEEPTEKK) are disordered. Residues 1116–1130 (THSSNESEYTFSSEF) are compositionally biased toward polar residues. A compositionally biased stretch (basic and acidic residues) spans 1136–1147 (IAPRTEEPTEKK). 2 positions are modified to phosphoserine: S1425 and S1625. In terms of domain architecture, Dilute spans 1507 to 1783 (TSTINSIKKV…IRTIQVRLRD (277 aa)). Position 1733 is a phosphothreonine (T1733).

It belongs to the TRAFAC class myosin-kinesin ATPase superfamily. Myosin family. In terms of assembly, may be a homodimer, which associates with multiple calmodulin or myosin light chains. Interacts with RIPL2, the interaction is required for its role in dendrite formation. Interacts with MLPH. Interacts with SYTL4. Interacts with MYRIP. Interacts with RAB10; mediates the transport to the plasma membrane of SLC2A4/GLUT4 storage vesicles. Interacts with FMR1; this interaction occurs in association with polyribosome.

The enzyme catalyses ATP + H2O = ADP + phosphate + H(+). In terms of biological role, processive actin-based motor that can move in large steps approximating the 36-nm pseudo-repeat of the actin filament. Can hydrolyze ATP in the presence of actin, which is essential for its function as a motor protein. Involved in melanosome transport. Also mediates the transport of vesicles to the plasma membrane. May also be required for some polarization process involved in dendrite formation. In Rattus norvegicus (Rat), this protein is Unconventional myosin-Va (Myo5a).